Consider the following 185-residue polypeptide: Cytidylate kinase (185 aa).

8-16 serves as a coordination point for ATP; sequence GPPGSGKTT.

This sequence belongs to the cytidylate kinase family. Type 2 subfamily.

Its subcellular location is the cytoplasm. The catalysed reaction is CMP + ATP = CDP + ADP. It carries out the reaction dCMP + ATP = dCDP + ADP. The chain is Cytidylate kinase from Desulfurococcus amylolyticus (strain DSM 18924 / JCM 16383 / VKM B-2413 / 1221n) (Desulfurococcus kamchatkensis).